A 140-amino-acid chain; its full sequence is MKKIVCVAIVGKGNNPLFIQDFSSSITDENKLKLHYIVHCSLDIIEDKPGSNKKLPSDMYLGLLYPTEDYKVYGYLTNTKIKFIIVVLDTSDIKDSDLKLFFKRLQTLFINTTSNPFYKPNSKVESKKFLQEVTNLVPSL.

Belongs to the TRAPP small subunits family. Sedlin subfamily.

The chain is Trafficking protein particle complex subunit 2-like protein (trappc2l) from Dictyostelium discoideum (Social amoeba).